The following is a 445-amino-acid chain: GTPase Der (445 aa).

EngA-type G domains lie at 3 to 167 (PVIA…YAGQ) and 180 to 353 (IKIA…AAAM). Residues 9–16 (GRPNVGKS), 56–60 (DTGGF), 119–122 (NKAE), 186–193 (GRPNVGKS), 233–237 (DTAGL), and 298–301 (NKWD) each bind GTP. Residues 354–438 (SKLPTPKLTR…PLRIEFRSSN (85 aa)) form the KH-like domain.

It belongs to the TRAFAC class TrmE-Era-EngA-EngB-Septin-like GTPase superfamily. EngA (Der) GTPase family. In terms of assembly, associates with the 50S ribosomal subunit.

Its function is as follows. GTPase that plays an essential role in the late steps of ribosome biogenesis. The polypeptide is GTPase Der (Burkholderia cenocepacia (strain ATCC BAA-245 / DSM 16553 / LMG 16656 / NCTC 13227 / J2315 / CF5610) (Burkholderia cepacia (strain J2315))).